The following is a 184-amino-acid chain: Photosystem I assembly protein Ycf4 (184 aa).

Helical transmembrane passes span 21–43 (NFCW…ISSY) and 63–85 (GLVM…CAIS).

The protein belongs to the Ycf4 family.

It is found in the plastid. It localises to the chloroplast thylakoid membrane. Functionally, seems to be required for the assembly of the photosystem I complex. This Spinacia oleracea (Spinach) protein is Photosystem I assembly protein Ycf4.